Here is a 118-residue protein sequence, read N- to C-terminus: Ribonuclease P protein component (118 aa).

It belongs to the RnpA family. In terms of assembly, consists of a catalytic RNA component (M1 or rnpB) and a protein subunit.

It catalyses the reaction Endonucleolytic cleavage of RNA, removing 5'-extranucleotides from tRNA precursor.. In terms of biological role, RNaseP catalyzes the removal of the 5'-leader sequence from pre-tRNA to produce the mature 5'-terminus. It can also cleave other RNA substrates such as 4.5S RNA. The protein component plays an auxiliary but essential role in vivo by binding to the 5'-leader sequence and broadening the substrate specificity of the ribozyme. The sequence is that of Ribonuclease P protein component from Shewanella frigidimarina (strain NCIMB 400).